Consider the following 316-residue polypeptide: 4-hydroxy-3-methylbut-2-enyl diphosphate reductase (316 aa).

Cys12 lines the [4Fe-4S] cluster pocket. 2 residues coordinate (2E)-4-hydroxy-3-methylbut-2-enyl diphosphate: His43 and His81. 2 residues coordinate dimethylallyl diphosphate: His43 and His81. Isopentenyl diphosphate-binding residues include His43 and His81. [4Fe-4S] cluster is bound at residue Cys103. His131 serves as a coordination point for (2E)-4-hydroxy-3-methylbut-2-enyl diphosphate. Position 131 (His131) interacts with dimethylallyl diphosphate. His131 lines the isopentenyl diphosphate pocket. The active-site Proton donor is Glu133. Residue Thr170 participates in (2E)-4-hydroxy-3-methylbut-2-enyl diphosphate binding. Residue Cys198 coordinates [4Fe-4S] cluster. Positions 226, 228, and 271 each coordinate (2E)-4-hydroxy-3-methylbut-2-enyl diphosphate. Dimethylallyl diphosphate contacts are provided by Ser226, Asn228, and Ser271. Isopentenyl diphosphate is bound by residues Ser226, Asn228, and Ser271.

Belongs to the IspH family. [4Fe-4S] cluster is required as a cofactor.

It catalyses the reaction isopentenyl diphosphate + 2 oxidized [2Fe-2S]-[ferredoxin] + H2O = (2E)-4-hydroxy-3-methylbut-2-enyl diphosphate + 2 reduced [2Fe-2S]-[ferredoxin] + 2 H(+). It carries out the reaction dimethylallyl diphosphate + 2 oxidized [2Fe-2S]-[ferredoxin] + H2O = (2E)-4-hydroxy-3-methylbut-2-enyl diphosphate + 2 reduced [2Fe-2S]-[ferredoxin] + 2 H(+). It functions in the pathway isoprenoid biosynthesis; dimethylallyl diphosphate biosynthesis; dimethylallyl diphosphate from (2E)-4-hydroxy-3-methylbutenyl diphosphate: step 1/1. Its pathway is isoprenoid biosynthesis; isopentenyl diphosphate biosynthesis via DXP pathway; isopentenyl diphosphate from 1-deoxy-D-xylulose 5-phosphate: step 6/6. Its function is as follows. Catalyzes the conversion of 1-hydroxy-2-methyl-2-(E)-butenyl 4-diphosphate (HMBPP) into a mixture of isopentenyl diphosphate (IPP) and dimethylallyl diphosphate (DMAPP). Acts in the terminal step of the DOXP/MEP pathway for isoprenoid precursor biosynthesis. This chain is 4-hydroxy-3-methylbut-2-enyl diphosphate reductase, found in Geobacillus thermodenitrificans (strain NG80-2).